The primary structure comprises 33 residues: Photosystem II reaction center protein Psb30 (33 aa).

The chain crosses the membrane as a helical span at residues 5–25 (LIVQLTSLALITLAGPLIVAL).

Belongs to the Psb30/Ycf12 family. As to quaternary structure, PSII is composed of 1 copy each of membrane proteins PsbA, PsbB, PsbC, PsbD, PsbE, PsbF, PsbH, PsbI, PsbJ, PsbK, PsbL, PsbM, PsbT, PsbY, PsbZ, Psb30/Ycf12, peripheral proteins of the oxygen-evolving complex and a large number of cofactors. It forms dimeric complexes.

The protein localises to the plastid. The protein resides in the chloroplast thylakoid membrane. A core subunit of photosystem II (PSII), probably helps stabilize the reaction center. This chain is Photosystem II reaction center protein Psb30, found in Euglena sanguinea.